Reading from the N-terminus, the 381-residue chain is Cytochrome b (381 aa).

The next 4 membrane-spanning stretches (helical) occupy residues 34-54, 78-99, 114-134, and 179-199; these read FGSL…MLAM, WMIR…YLHI, WNTG…GYVL, and FFAL…VHLT. Heme b-binding residues include H84 and H98. The heme b site is built by H183 and H197. Position 202 (H202) interacts with a ubiquinone. A run of 4 helical transmembrane segments spans residues 227-247, 289-309, 321-341, and 348-368; these read MKDL…AFFT, LGGV…PLLH, MSQI…WVGS, and FIII…FLFP.

This sequence belongs to the cytochrome b family. The cytochrome bc1 complex contains 11 subunits: 3 respiratory subunits (MT-CYB, CYC1 and UQCRFS1), 2 core proteins (UQCRC1 and UQCRC2) and 6 low-molecular weight proteins (UQCRH/QCR6, UQCRB/QCR7, UQCRQ/QCR8, UQCR10/QCR9, UQCR11/QCR10 and a cleavage product of UQCRFS1). This cytochrome bc1 complex then forms a dimer. Heme b is required as a cofactor.

It is found in the mitochondrion inner membrane. Its function is as follows. Component of the ubiquinol-cytochrome c reductase complex (complex III or cytochrome b-c1 complex) that is part of the mitochondrial respiratory chain. The b-c1 complex mediates electron transfer from ubiquinol to cytochrome c. Contributes to the generation of a proton gradient across the mitochondrial membrane that is then used for ATP synthesis. The protein is Cytochrome b (MT-CYB) of Nothoprocta perdicaria (Chilean tinamou).